The primary structure comprises 355 residues: Peptide chain release factor 1 (355 aa).

Glutamine 233 carries the post-translational modification N5-methylglutamine.

Belongs to the prokaryotic/mitochondrial release factor family. Post-translationally, methylated by PrmC. Methylation increases the termination efficiency of RF1.

The protein localises to the cytoplasm. Peptide chain release factor 1 directs the termination of translation in response to the peptide chain termination codons UAG and UAA. The polypeptide is Peptide chain release factor 1 (Syntrophobacter fumaroxidans (strain DSM 10017 / MPOB)).